Here is a 316-residue protein sequence, read N- to C-terminus: tRNA dimethylallyltransferase (316 aa).

17-24 is a binding site for ATP; the sequence is GPTASGKT. 19 to 24 contacts substrate; it reads TASGKT. 4 interaction with substrate tRNA regions span residues 42–45, 166–170, 247–252, and 280–287; these read DSAL, QRLSR, RCVGYR, and KRQITWLR.

The protein belongs to the IPP transferase family. Monomer. Mg(2+) serves as cofactor.

The enzyme catalyses adenosine(37) in tRNA + dimethylallyl diphosphate = N(6)-dimethylallyladenosine(37) in tRNA + diphosphate. In terms of biological role, catalyzes the transfer of a dimethylallyl group onto the adenine at position 37 in tRNAs that read codons beginning with uridine, leading to the formation of N6-(dimethylallyl)adenosine (i(6)A). This Shigella boydii serotype 18 (strain CDC 3083-94 / BS512) protein is tRNA dimethylallyltransferase.